We begin with the raw amino-acid sequence, 392 residues long: 2-oxoisovalerate dehydrogenase subunit beta, mitochondrial (392 aa).

A mitochondrion-targeting transit peptide spans 1-50 (MAVVAAAAGWLLRLRAAGAEGHWRRLPGAGLARGFLHPAATVEDAAQRRQ). A thiamine diphosphate-binding site is contributed by Tyr-152. Residues Gly-178, Leu-180, Thr-181, Cys-228, and Asp-231 each coordinate K(+). Residue Lys-232 is modified to N6-acetyllysine. Asn-233 is a binding site for K(+). Lys-241 bears the N6-acetyllysine mark.

As to quaternary structure, heterotetramer of 2 alpha/BCKDHA and 2 beta chains/BCKDHB that forms the branched-chain alpha-keto acid decarboxylase (E1) component of the BCKD complex. The branched-chain alpha-ketoacid dehydrogenase is a large complex composed of three major building blocks E1, E2 and E3. It is organized around E2, a 24-meric cubic core composed of DBT, to which are associated 6 to 12 copies of E1, and approximately 6 copies of the dehydrogenase E3, a DLD dimer. Thiamine diphosphate is required as a cofactor.

Its subcellular location is the mitochondrion matrix. The catalysed reaction is N(6)-[(R)-lipoyl]-L-lysyl-[protein] + 3-methyl-2-oxobutanoate + H(+) = N(6)-[(R)-S(8)-2-methylpropanoyldihydrolipoyl]-L-lysyl-[protein] + CO2. Functionally, together with BCKDHA forms the heterotetrameric E1 subunit of the mitochondrial branched-chain alpha-ketoacid dehydrogenase (BCKD) complex. The BCKD complex catalyzes the multi-step oxidative decarboxylation of alpha-ketoacids derived from the branched-chain amino-acids valine, leucine and isoleucine producing CO2 and acyl-CoA which is subsequently utilized to produce energy. The E1 subunit catalyzes the first step with the decarboxylation of the alpha-ketoacid forming an enzyme-product intermediate. A reductive acylation mediated by the lipoylamide cofactor of E2 extracts the acyl group from the E1 active site for the next step of the reaction. This chain is 2-oxoisovalerate dehydrogenase subunit beta, mitochondrial, found in Homo sapiens (Human).